The sequence spans 272 residues: 3',5'-cyclic adenosine monophosphate phosphodiesterase CpdA (272 aa).

Fe cation contacts are provided by D21, H23, D63, N93, H161, H200, and H202. AMP-binding positions include H23, D63, and 93 to 94 (NH). H202 serves as a coordination point for AMP.

The protein belongs to the cyclic nucleotide phosphodiesterase class-III family. Monomer. A divalent metal cation is required as a cofactor.

The enzyme catalyses 3',5'-cyclic AMP + H2O = AMP + H(+). Activated by iron. Other divalent metal ions have no effect. In terms of biological role, hydrolyzes cAMP to 5'-AMP. Plays an important regulatory role in modulating the intracellular concentration of cAMP, thereby influencing cAMP-dependent processes. Specifically required for regulation of virulence factors. Can also hydrolyze cGMP, but cGMP is unlikely to be synthesized by P.aeruginosa and cAMP is probably the biologically relevant substrate for CpdA in vivo. The protein is 3',5'-cyclic adenosine monophosphate phosphodiesterase CpdA of Pseudomonas aeruginosa.